The sequence spans 423 residues: Protein TylM3 (423 aa).

Positions 1 to 21 (MNTAAGPTGTAAGGTTAPAAA) are enriched in low complexity. Disordered regions lie at residues 1-26 (MNTA…DLSR) and 117-149 (GSAL…RDDP). Residues 139-149 (RPPDREERDDP) are compositionally biased toward basic and acidic residues.

This sequence belongs to the cytochrome P450 family.

It functions in the pathway antibiotic biosynthesis; tylosin biosynthesis. Involved in the biosynthesis of the macrolide antibiotic tylosin derived from the polyketide lactone tylactone. TylM3 is required for the glycosylation of the 5-hydroxyl group of tylactone to yield 5-O-mycaminosytylactone. The protein is Protein TylM3 of Streptomyces fradiae (Streptomyces roseoflavus).